The following is a 206-amino-acid chain: Methylthioribulose-1-phosphate dehydratase (206 aa).

2 residues coordinate Zn(2+): H96 and H98.

The protein belongs to the aldolase class II family. MtnB subfamily. The cofactor is Zn(2+).

The catalysed reaction is 5-(methylsulfanyl)-D-ribulose 1-phosphate = 5-methylsulfanyl-2,3-dioxopentyl phosphate + H2O. It participates in amino-acid biosynthesis; L-methionine biosynthesis via salvage pathway; L-methionine from S-methyl-5-thio-alpha-D-ribose 1-phosphate: step 2/6. Its function is as follows. Catalyzes the dehydration of methylthioribulose-1-phosphate (MTRu-1-P) into 2,3-diketo-5-methylthiopentyl-1-phosphate (DK-MTP-1-P). This is Methylthioribulose-1-phosphate dehydratase from Azotobacter vinelandii (strain DJ / ATCC BAA-1303).